The sequence spans 434 residues: ATP-dependent RNA helicase uap56 (434 aa).

The interval 1–43 (MASAQEDLIDYEEEEELVQDQPAQEITPAADTAENGEKSDKKG) is disordered. A compositionally biased stretch (acidic residues) spans 7-18 (DLIDYEEEEELV). The Q motif signature appears at 51–79 (TGFRDFLLKPELLRAITDSGFEHPSEVQQ). Residues 82–257 (IPQSILGTDV…KKFMQNPLEI (176 aa)) enclose the Helicase ATP-binding domain. Position 95 to 102 (95 to 102 (AKSGMGKT)) interacts with ATP. Residues 204–207 (DECD) carry the DECD box motif. Residues 269–430 (GLQQHYVKLE…ELPDEIDVGS (162 aa)) form the Helicase C-terminal domain.

The protein belongs to the DEAD box helicase family. DECD subfamily. In terms of assembly, interacts with mlo3 and rae1.

Its subcellular location is the nucleus. The enzyme catalyses ATP + H2O = ADP + phosphate + H(+). In terms of biological role, ATP-binding RNA helicase involved in transcription elongation and required for the export of mRNA out of the nucleus. SUB2 also plays a role in pre-mRNA splicing and spliceosome assembly. May be involved in rDNA and telomeric silencing, and maintenance of genome integrity. Links the mRNA adapter mlo3 to rae1 for targeting mRNA-protein complex to the proteins of the nucleoporin complex (NPC). This is ATP-dependent RNA helicase uap56 (uap56) from Schizosaccharomyces pombe (strain 972 / ATCC 24843) (Fission yeast).